Reading from the N-terminus, the 416-residue chain is CinA-like protein (416 aa).

The protein belongs to the CinA family.

The protein is CinA-like protein of Synechocystis sp. (strain ATCC 27184 / PCC 6803 / Kazusa).